The following is a 205-amino-acid chain: Protein phosphatase inhibitor 2 (205 aa).

Disordered stretches follow at residues 1–46 and 64–205; these read MAAS…KSQK and GLMK…SQSS. Alanine 2 carries the N-acetylalanine modification. Required for binding PPP1CC stretches follow at residues 12-17 and 43-55; these read KGILKN and KSQK…ILAT. The segment covering 17–26 has biased composition (polar residues); sequence NKTSSTSSRV. Over residues 35–46 the composition is skewed to basic and acidic residues; the sequence is SVDEELSKKSQK. Residue serine 44 is modified to Phosphoserine; by ATM. Threonine 73 is modified (phosphothreonine; by GSK3). Residues 80-91 show a composition bias toward acidic residues; sequence GDDDDAYSDTET. Serine 87 carries the phosphoserine modification. Residues threonine 89, threonine 92, and threonine 96 each carry the phosphothreonine modification. Residues 110-120 show a composition bias toward basic and acidic residues; it reads SEPKYRIREQE. Phosphoserine occurs at positions 121, 122, 127, and 130. Acidic residues predominate over residues 121–130; it reads SSGEEDSDLS. Over residues 131–143 the composition is skewed to basic and acidic residues; that stretch reads PEEREKKRQFEMK. The required for binding PPP1CC catalytic center, displacing metal ions and inhibition of PPP1CC catalytic activity stretch occupies residues 147 to 150; the sequence is HYNE. The span at 167-179 shows a compositional bias: acidic residues; sequence DDEEDEEMSETAD. The segment covering 182 to 205 has biased composition (polar residues); sequence SMNTEESNQGSTPSDQRQNKSQSS.

The protein belongs to the protein phosphatase inhibitor 2 family. In terms of assembly, heterodimer with PP1. Phosphorylation on Ser-44 by ATM activates PP1 by dissociating the PP1-PPP1R2 complex. Phosphorylation on Thr-73 by GSK3 activates PP1 by dissociating the PP1-PPP1R2 complex.

Functionally, inhibitor of protein-phosphatase 1. The polypeptide is Protein phosphatase inhibitor 2 (PPP1R2) (Oryctolagus cuniculus (Rabbit)).